The following is a 506-amino-acid chain: Maturase K (506 aa).

Belongs to the intron maturase 2 family. MatK subfamily.

Its subcellular location is the plastid. The protein localises to the chloroplast. Its function is as follows. Usually encoded in the trnK tRNA gene intron. Probably assists in splicing its own and other chloroplast group II introns. The protein is Maturase K of Medicago truncatula (Barrel medic).